The following is a 337-amino-acid chain: GTP 3',8-cyclase (337 aa).

A Radical SAM core domain is found at 17 to 243; it reads PFQRQYYYLR…HKSHTDGPAK (227 aa). Arg26 is a GTP binding site. [4Fe-4S] cluster-binding residues include Cys33 and Cys37. Position 39 (Tyr39) interacts with S-adenosyl-L-methionine. Cys40 is a [4Fe-4S] cluster binding site. Position 76 (Arg76) interacts with GTP. Gly80 contributes to the S-adenosyl-L-methionine binding site. GTP is bound at residue Thr107. An S-adenosyl-L-methionine-binding site is contributed by Ser131. GTP is bound at residue Lys168. Met202 lines the S-adenosyl-L-methionine pocket. Positions 265 and 268 each coordinate [4Fe-4S] cluster. 270-272 serves as a coordination point for GTP; that stretch reads RLR. [4Fe-4S] cluster is bound at residue Cys282.

The protein belongs to the radical SAM superfamily. MoaA family. In terms of assembly, monomer and homodimer. The cofactor is [4Fe-4S] cluster.

It catalyses the reaction GTP + AH2 + S-adenosyl-L-methionine = (8S)-3',8-cyclo-7,8-dihydroguanosine 5'-triphosphate + 5'-deoxyadenosine + L-methionine + A + H(+). Its pathway is cofactor biosynthesis; molybdopterin biosynthesis. In terms of biological role, catalyzes the cyclization of GTP to (8S)-3',8-cyclo-7,8-dihydroguanosine 5'-triphosphate. This Haemophilus influenzae (strain PittGG) protein is GTP 3',8-cyclase.